Reading from the N-terminus, the 445-residue chain is Adenine permease AdeP (445 aa).

At 1–28 (MSHQHTTQTSGQGMLERVFKLREHGTTA) the chain is on the cytoplasmic side. Residues 29-52 (RTEVIAGFTTFLTMVYIVFVNPQI) traverse the membrane as a helical segment. Over 53–62 (LGVAGMDTSA) the chain is Periplasmic. A helical transmembrane segment spans residues 63-81 (VFVTTCLIAAFGSIMMGLF). The Cytoplasmic portion of the chain corresponds to 82-83 (AN). Residues 84-100 (LPVALAPAMGLNAFFAF) form a discontinuously helical membrane-spanning segment. The Periplasmic portion of the chain corresponds to 101 to 112 (VVVQAMGLPWQV). Residues 113 to 132 (GMGAIFWGAIGLLLLTIFRV) form a helical membrane-spanning segment. The Cytoplasmic segment spans residues 133–144 (RYWMIANIPVSL). Residues 145–165 (RVGITSGIGLFIGMMGLKNAG) traverse the membrane as a helical segment. The Periplasmic portion of the chain corresponds to 166 to 181 (VIVANPETLVSIGNLT). The helical transmembrane segment at 182 to 199 (SHSVLLGILGFFIIAILA) threads the bilayer. Residues 200–203 (SRNI) are Cytoplasmic-facing. A helical transmembrane segment spans residues 204-222 (HAAVLVSIVVTTLLGWMLG). Over 223–250 (DVHYNGIVSAPPSVMTVVGHVDLAGSFN) the chain is Periplasmic. Residues 251-279 (LGLAGVIFSFMLVNLFDSSGTLIGVTDKA) form a helical membrane-spanning segment. Residues 280–292 (GLADEKGKFPRMK) lie on the Cytoplasmic side of the membrane. A helical membrane pass occupies residues 293 to 308 (QALYVDSISSVTGSFI). Residues 309–310 (GT) lie on the Periplasmic side of the membrane. The chain crosses the membrane as a discontinuously helical span at residues 311 to 326 (SSVTAYIESSSGVSVG). The Cytoplasmic segment spans residues 327 to 330 (GRTG). A helical transmembrane segment spans residues 331–345 (LTAVVVGLLFLLVIF). Topologically, residues 346-356 (LSPLAGMVPGY) are periplasmic. Residues 357 to 376 (AAAGALIYVGVLMTSSLARV) form a helical membrane-spanning segment. Over 377–381 (NWQDL) the chain is Cytoplasmic. Residues 382 to 417 (TESVPAFITAVMMPFSFSITEGIALGFISYCVMKIG) constitute an intramembrane region (discontinuously helical). Residues 418–445 (TGRLRDLSPCVIIVALLFILKIVFIDAH) lie on the Cytoplasmic side of the membrane.

This sequence belongs to the nucleobase:cation symporter-2 (NCS2) (TC 2.A.40) family. Azg-like subfamily.

Its subcellular location is the cell inner membrane. With respect to regulation, internal adenine may inhibit transport. In terms of biological role, high-affinity transporter for adenine. This Escherichia coli (strain K12) protein is Adenine permease AdeP (adeP).